The primary structure comprises 370 residues: Putative L-lysine 2,3-aminomutase aq_454 (370 aa).

One can recognise a Radical SAM core domain in the interval His-107–Pro-322. [4Fe-4S] cluster is bound by residues Cys-121, Cys-125, and Cys-128. The residue at position 334 (Lys-334) is an N6-(pyridoxal phosphate)lysine.

Belongs to the radical SAM superfamily. KamA family. The cofactor is [4Fe-4S] cluster. Pyridoxal 5'-phosphate is required as a cofactor.

This is Putative L-lysine 2,3-aminomutase aq_454 from Aquifex aeolicus (strain VF5).